Consider the following 1001-residue polypeptide: MNGLKMLLFSTTLLTAFTLHAQVTLKQQVKITDEGLHFDGRNLDFSNVGTPDTGEKYDFFFGPNISAHGDAVKTYKHYVFMTWYKGGKSERNVMLSRYNTLSGELSTIEFPHRHTGFRGDPLVGESHNTIGLSVSPINGTIHMVFDMHAYDNNNHDGKFKDDFFRYSYSIAGAAELPHSEFTLDKFVKDTSEVSQGENDYKHLTMTGDLSDKGNFARLTYPKFFTTVDGTLLLYMRLGGNNNGAYVFNRYDAETETWSTFTKFNENNQKLKGNPYNWGLYGNMKYVNGKLRVGFQQRSNDNSDKYKYQNGVYYAYSDHPDGFGDWKNHKGEPMTWPLINSDEIKVFEPGDYVSHTDANSVYIVGSFDWTVTEKGDIHIISKVRSTDRSRPDYEEVYIHSYKPAGAEDFIISTDFTGASEIYTSGDNVYIVGLEGGRPYVEKAQGGTNNFVRVYEASDGPTFDHGTLYIKDGKVYYYLMERTSGNAMPLYLQIIDLDLDLESDANAPIVSFPSPSLTVEQGFEKLSLNIAAESPVEVRTIQSVTLYINDELVRTDTSLPYLFGHGSKPHETGAMGWLDTHEPNPSPLPAGRHIFKAVAVDSEGDSSVATMMLTVNSNAPIISFPQESLEVDEGFEKLSLNISAESAVEGRTIESVSLYIDGEFVRTDTSLPYLFGHASKPHETGAMGWLDTHSPNPSPLTSGTYEFTAVAIDSEGEESTATMQLVVKGEPEPPVVTWPNSTVTVYEGYEKLAITIDAESPVEGRDIQSVTLYRNGELVRVDTRPVWNFGHSHAPYEFGAMGWLDRHDPNPAPLSVGTHTFTAVARDSAGLETESDMTLIVLSLPGPSVMINESDISLLTEYQNLSITADASTANDDTSLVSLALYIDDQLVREIYEPPFEWGADGYSNELLELSEGSHLARVVATDSNNKQSESSIFINIDLLGDLNKDSVVDKGDTRLFTAKLRAGETMDIRYDFNGDGVVNNRDTRGLIRRCTYSRCTSN.

The first 21 residues, 1–21, serve as a signal peptide directing secretion; the sequence is MNGLKMLLFSTTLLTAFTLHA. 126–127 is a binding site for substrate; that stretch reads SH. The active-site Proton donor/acceptor is the histidine 127. Residues aspartate 189, aspartate 199, and lysine 201 each coordinate Ca(2+). Substrate is bound by residues tyrosine 280 and arginine 297. Ca(2+) is bound by residues aspartate 300, aspartate 303, and tyrosine 305. Tyrosine 361 lines the substrate pocket.

This sequence belongs to the polysaccharide lyase 24 family.

Its function is as follows. Ulvan lyase involved in ulvan degradation. Ulvan is the main polysaccharide component of the Ulvales (green seaweed) cell wall. It is composed of disaccharide building blocks comprising 3-sulfated rhamnose (Rha3S) linked to D-glucuronic acid (GlcA), L-iduronic acid (IduA), or D-xylose (Xyl). Ulvan lyase catalyzes preferentially the endolytic cleavage of the glycosidic bond between Rha3S and the uronic acid GlcA, but not IduA, producing oligosaccharides that have unsaturated 4-deoxy-L-threo-hex-4-enopyranosiduronic acid (deltaUA) at the non-reducing end. The most abundant end products in the degradation of the ulvan polysaccharide were deltaUA-Rha3S disaccharides and deltaUA-Rha3S-IduA-Rha3S and deltaUA-Rha3S-Xyl-Rha3S tetrasaccharides. This Pseudoalteromonas sp. (strain PLSV) protein is Ulvan lyase, long isoform.